We begin with the raw amino-acid sequence, 172 residues long: uncharacterized protein (172 aa).

The chain crosses the membrane as a helical span at residues 109–129 (MLLLYLYYNLLLLTASTPLTF).

The protein resides in the membrane. This is an uncharacterized protein from Saccharomyces cerevisiae (strain ATCC 204508 / S288c) (Baker's yeast).